The following is a 957-amino-acid chain: MTQTLSQLENRGAFIERHIGPDAAQQQEMLNAVGAESLNALTGQIVPKDIQLATPPQVGEAATEYAALAELKAIAGRNKRFTSYIGMGYTAVQLPPVILRNMLENPGWYTAYTPYQPEVSQGRLEALLNFQQVTLDLTGLDMASASLLDEATAAAEAMAMAKRVSKLKNANRFFVAADVHPQTLDVVRTRAKTFGFDVIVDDADKVLDHQDVFGVLLQQVGTTGEIHDYGTLISELKARKVIVSVAADFMALVLLTAPGKQGADIVFGSAQRFGVPMGYGGPHAAFFAAKDEFKRSMPGRIIGVSKDAAGNTALRMAMQTREQHIRREKANSNICTSQVLLANIASLYAVYHGPVGLKRIANRIHRLTDILAAGLQQKGLKLRHAHYFDTLCVEVADKAAVLARAEAAEINLRSDIHNAVGITLDETTTRENVAQLFNVLLGDSHGLNIETLDKDVALDSRSIQQGMLRDDAILTHPVFNRYHSETEMMRYMHSLERKDLALNQAMIPLGSCTMKLNAAAEMIPITWPEFAELHPFCPPEQAEGYHQMISQLSDWLVKLTGYDAVCMQPNSGAQGEYAGLLAIRHYHGSRNEGHRDICLIPASAHGTNPASAHMAGMQVVVVACDKNGNIDLDDLRAKAEQHAANLSCIMVTYPSTHGVYEETIREVCEVVHQFGGQVYLDGANMNAQVGITSPGFIGADVSHLNLHKTFCIPHGGGGPGMGPIGVKAHLAPFVPGHSVVQIEGMLTRQGAVSAAPFGSASILPISWMYIRMMGAEGLKQASQVAILNANYIASRLKDAYPVLYTGRDGRVAHECILDIRPLKEETGISELDIAKRLIDYGFHAPTMSFPVAGTLMVEPTESEGKAELDRFIDAMLAIRAEIDQVKAGVWPLEDNPLVNAPHIQSELVAEWAHPYSREVAVFPAGVADKYWPTVKRLDDVYGDRNLFCSCVPISDYQ.

The residue at position 708 (lysine 708) is an N6-(pyridoxal phosphate)lysine.

This sequence belongs to the GcvP family. As to quaternary structure, the glycine cleavage system is composed of four proteins: P, T, L and H. Requires pyridoxal 5'-phosphate as cofactor.

It carries out the reaction N(6)-[(R)-lipoyl]-L-lysyl-[glycine-cleavage complex H protein] + glycine + H(+) = N(6)-[(R)-S(8)-aminomethyldihydrolipoyl]-L-lysyl-[glycine-cleavage complex H protein] + CO2. Its function is as follows. The glycine cleavage system catalyzes the degradation of glycine. The P protein binds the alpha-amino group of glycine through its pyridoxal phosphate cofactor; CO(2) is released and the remaining methylamine moiety is then transferred to the lipoamide cofactor of the H protein. The polypeptide is Glycine dehydrogenase (decarboxylating) (Salmonella typhi).